We begin with the raw amino-acid sequence, 119 residues long: MVKLAFPRELRLLTPSQFTFVFQQPQRAGTPQITILGRLNSLGHPRIGLTVAKKNVRRAHERNRIKRLTRESFRLRQHELPAMDFVVVAKKGVANLDNRALSEALEKLWRRHCRLARGS.

The protein belongs to the RnpA family. As to quaternary structure, consists of a catalytic RNA component (M1 or rnpB) and a protein subunit.

It catalyses the reaction Endonucleolytic cleavage of RNA, removing 5'-extranucleotides from tRNA precursor.. Functionally, RNaseP catalyzes the removal of the 5'-leader sequence from pre-tRNA to produce the mature 5'-terminus. It can also cleave other RNA substrates such as 4.5S RNA. The protein component plays an auxiliary but essential role in vivo by binding to the 5'-leader sequence and broadening the substrate specificity of the ribozyme. The sequence is that of Ribonuclease P protein component from Escherichia coli O157:H7.